The following is a 701-amino-acid chain: MSQEKKVFKTEWAGRSLTIETGQLAKQANGAVLVRYGDTVVLSTATASKEPRDGDFFPLTVNYEEKMYAAGKIPGGFKKREGRPGDEATLTARLIDRPIRPLFPKGYRHDVQIMNIVLSADPDCSPEMAAMIGSSMALSVSDIPFQGPIAGVNVGYIDGKYVINPSVADKEISRLDLEVAGHKDAVNMVEAGASEITESEMLEAIFFGHEEIKRLVAFQQEIIDHIQPIKQEFVPVERDEDLVEKVKSLTEDKGLKDTVLTFDKQQRDENLDALKEEVVGHFLDEEDPENETLVKEVYAILNDLIKEEVRRLIADEKIRPDGRKVDEIRPLESEVGLLPRAHGSGLFTRGQTQALSVLTLGALGDYQLIDGLGPEVEKRFMHHYNFPNFSVGETGPVRAPGRREIGHGALGERALRYIIPDTQDFPYTIRIVSEVLESNGSSSQASICGSTLALMDAGVPIKAPVAGIAMGLVTRDDSYTILTDIQGMEDALGDMDFKVAGTKDGITAIQMDIKIDGLTREVIEEALEQARQGRLAIMDHMLHTIEQPREELSAYAPKVVTMSINPDKIRDVIGPGGKKINEIIDETGVKLDIEQDGTIFIGAVDQAMINRAKEIIEDITREAEVGQVYHAKVKRIEKYGAFVELFPGKDALLHISQISQERINKVEDVLKIGDTIEVKITEIDKQGRVNASHKVLEQSKN.

Residues Asp490 and Asp496 each coordinate Mg(2+). One can recognise a KH domain in the interval 557–616 (PKVVTMSINPDKIRDVIGPGGKKINEIIDETGVKLDIEQDGTIFIGAVDQAMINRAKEII). Residues 626 to 694 (GQVYHAKVKR…KQGRVNASHK (69 aa)) form the S1 motif domain.

It belongs to the polyribonucleotide nucleotidyltransferase family. Requires Mg(2+) as cofactor.

The protein resides in the cytoplasm. It carries out the reaction RNA(n+1) + phosphate = RNA(n) + a ribonucleoside 5'-diphosphate. Its function is as follows. Involved in mRNA degradation. Catalyzes the phosphorolysis of single-stranded polyribonucleotides processively in the 3'- to 5'-direction. The polypeptide is Polyribonucleotide nucleotidyltransferase (Staphylococcus epidermidis (strain ATCC 12228 / FDA PCI 1200)).